The following is a 293-amino-acid chain: uncharacterized protein (293 aa).

This is an uncharacterized protein from Mycobacterium tuberculosis (strain CDC 1551 / Oshkosh).